The sequence spans 282 residues: Small ribosomal subunit protein uS2 (282 aa).

A disordered region spans residues 245-266 (AEEAVEELPLPTGEAQDEASSK).

This sequence belongs to the universal ribosomal protein uS2 family.

This Chlamydia trachomatis serovar D (strain ATCC VR-885 / DSM 19411 / UW-3/Cx) protein is Small ribosomal subunit protein uS2 (rpsB).